The following is a 258-amino-acid chain: MYYSSPTCFVLITIFAVVVTQLIFMRTVSSLNMTNAYLNHKCLANQGKYKPGSWYEKKLQSIIVSIGSGDGFTLGYDMMALGKDSDYVAVTNQCRGDSNGSMCRSCFATAIARVTRCPRYKGAIIWYDQCTLQISPFDTQGKFDKDNDFCMSNKKKMNVDSFGEKWMTFLDNLVGIALKDHLYAAGDTRFGTKKLYGMVQCRLDIYNNSCRECVGHIAVKFQDCWHGKQGARVLGSGCNFRYELYPFVGSNKRGRNLN.

The signal sequence occupies residues 1–30 (MYYSSPTCFVLITIFAVVVTQLIFMRTVSS). Gnk2-homologous domains follow at residues 37–139 (YLNH…PFDT) and 144–247 (DKDN…LYPF).

This sequence belongs to the cysteine-rich repeat secretory protein family.

Its subcellular location is the secreted. The protein is Putative cysteine-rich repeat secretory protein 16 (CRRSP16) of Arabidopsis thaliana (Mouse-ear cress).